We begin with the raw amino-acid sequence, 157 residues long: Transcription elongation factor GreA (157 aa).

Positions Met1–Val75 form a coiled coil.

The protein belongs to the GreA/GreB family.

Functionally, necessary for efficient RNA polymerase transcription elongation past template-encoded arresting sites. The arresting sites in DNA have the property of trapping a certain fraction of elongating RNA polymerases that pass through, resulting in locked ternary complexes. Cleavage of the nascent transcript by cleavage factors such as GreA or GreB allows the resumption of elongation from the new 3'terminus. GreA releases sequences of 2 to 3 nucleotides. In Mycoplasma mycoides subsp. mycoides SC (strain CCUG 32753 / NCTC 10114 / PG1), this protein is Transcription elongation factor GreA.